Consider the following 512-residue polypeptide: Annexin A7 (512 aa).

Over residues Gly-14–Ala-38 the composition is skewed to low complexity. Disordered regions lie at residues Gly-14–His-62 and Gly-146–Thr-190. The span at Ala-39–Asn-52 shows a compositional bias: gly residues. A compositionally biased stretch (low complexity) spans Met-164–Ser-182. Annexin repeat units follow at residues Phe-209–Met-279, Pro-280–Ala-351, Gln-364–Gln-436, and Asn-440–Gly-511.

This sequence belongs to the annexin family.

Its function is as follows. Calcium/phospholipid-binding protein which promotes membrane fusion and is involved in exocytosis. The polypeptide is Annexin A7 (anxa7) (Xenopus laevis (African clawed frog)).